Here is a 159-residue protein sequence, read N- to C-terminus: Ecotin (159 aa).

An N-terminal signal peptide occupies residues 1 to 22 (MRPTPMTAILALSLAAAAPAMA). Cys68 and Cys105 form a disulfide bridge.

This sequence belongs to the protease inhibitor I11 (ecotin) family. In terms of assembly, homodimer.

The protein localises to the periplasm. Its function is as follows. General inhibitor of family S1 serine proteases. In Pseudomonas putida (strain ATCC 700007 / DSM 6899 / JCM 31910 / BCRC 17059 / LMG 24140 / F1), this protein is Ecotin.